Consider the following 93-residue polypeptide: uncharacterized protein (93 aa).

The interval 35 to 72 (KSVPPPTPPKPVKKTPSPTLPKPSKQKQEPQVEVNEDR) is disordered. Basic and acidic residues predominate over residues 60–72 (QKQEPQVEVNEDR).

This is an uncharacterized protein from Ostreid herpesvirus 1 (isolate France) (OsHV-1).